Reading from the N-terminus, the 168-residue chain is Dual-action ribosomal maturation protein DarP (168 aa).

It belongs to the DarP family.

It localises to the cytoplasm. Functionally, member of a network of 50S ribosomal subunit biogenesis factors which assembles along the 30S-50S interface, preventing incorrect 23S rRNA structures from forming. Promotes peptidyl transferase center (PTC) maturation. The polypeptide is Dual-action ribosomal maturation protein DarP (Neisseria meningitidis serogroup B (strain ATCC BAA-335 / MC58)).